The following is a 551-amino-acid chain: MFS efflux transporter aclA (551 aa).

8 helical membrane passes run 26–46 (WAVF…ITAI), 64–84 (VWIA…IGQI), 93–113 (PMII…GATS), 125–145 (GLGA…LVPL), 154–174 (IALS…GALV), 181–201 (WVFY…VLCL), 220–240 (WVGN…LVIG), and 251–271 (VLVP…FEAS). Asn286 carries an N-linked (GlcNAc...) asparagine glycan. The next 6 helical transmembrane spans lie at 294–314 (VLAF…TLFF), 327–347 (VDVI…GAIM), 356–376 (LHWA…TWDA), 385–405 (ILQC…LPAI), 420–440 (AYAF…AVVF), and 492–512 (LRTV…LVVV).

The protein belongs to the major facilitator superfamily.

The protein resides in the membrane. Functionally, MFS efflux transporter; part of the gene cluster that mediates the biosynthesis of aspirochlorine (or antibiotic A30641), an unusual halogenated spiro compound with distinctive antifungal properties due to selective inhibition of protein biosynthesis, and which is also active against bacteria, viruses, and murine tumor cells. This is MFS efflux transporter aclA from Aspergillus oryzae (strain ATCC 42149 / RIB 40) (Yellow koji mold).